The primary structure comprises 359 residues: Type-1 angiotensin II receptor (359 aa).

Topologically, residues 1 to 25 (MILNSSTEDGIKRIQDDCPKAGRHN) are extracellular. N-linked (GlcNAc...) asparagine glycosylation is present at Asn4. Positions 15 and 17 each coordinate angiotensin II. Disulfide bonds link Cys18/Cys274 and Cys101/Cys180. The helical transmembrane segment at 26-55 (YIFIMIPTLYSIIFVVGIFGNSLVVIVIYF) threads the bilayer. The Cytoplasmic portion of the chain corresponds to 56-61 (YMKLKT). The helical transmembrane segment at 62 to 89 (VASVFLLNLALADLCFLLTLPLWAVYTA) threads the bilayer. The Extracellular segment spans residues 90-98 (MEYRWPFGN). The chain crosses the membrane as a helical span at residues 99–125 (YLCKIASASVSFNLYASVFLLTCLSID). Residues 126–141 (RYLAIVHPMKSRLRRT) are Cytoplasmic-facing. Residues 142-165 (MLVAKVTCIIIWLLAGLASLPTII) traverse the membrane as a helical segment. At 166–190 (HRNVFFIENTNITVCAFHYESQNST) the chain is on the extracellular side. Arg167 is a binding site for angiotensin II. A glycan (N-linked (GlcNAc...) asparagine) is linked at Asn176. Angiotensin II is bound by residues Phe182, His183, and Tyr184. N-linked (GlcNAc...) asparagine glycosylation is present at Asn188. The helical transmembrane segment at 191-216 (LPVGLGLTKNILGFLFPFLIILTSYT) threads the bilayer. Lys199 contacts angiotensin II. Residues 217–239 (LIWKTLKKAYEIQKNKPRKDDIF) are Cytoplasmic-facing. A helical transmembrane segment spans residues 240–268 (KIILAIVLFFFFSWVPHQIFTFMDVLIQL). Residues 269-278 (GLIRDCKIED) are Extracellular-facing. A helical transmembrane segment spans residues 279–304 (IVDTAMPITICLAYFNNCLNPLFYGF). Over 305–359 (LGKKFKKYFLQLLKYIPPKAKSHSNLSTKMSTLSYRPSENGNSSTKKPAPCIEVE) the chain is Cytoplasmic. The segment covering 336–350 (TLSYRPSENGNSSTK) has biased composition (polar residues). Residues 336–359 (TLSYRPSENGNSSTKKPAPCIEVE) are disordered. The S-palmitoyl cysteine moiety is linked to residue Cys355.

The protein belongs to the G-protein coupled receptor 1 family. Interacts with MAS1. Interacts with ARRB1. Interacts with FLNA (via filamin repeat 21); increases PKA-mediated phosphorylation of FLNA. In terms of processing, C-terminal Ser or Thr residues may be phosphorylated. As to expression, adrenal medulla, cortex and kidney.

It localises to the cell membrane. Receptor for angiotensin II, a vasoconstricting peptide, which acts as a key regulator of blood pressure and sodium retention by the kidney. The activated receptor in turn couples to G-alpha proteins G(q) (GNAQ, GNA11, GNA14 or GNA15) and thus activates phospholipase C and increases the cytosolic Ca(2+) concentrations, which in turn triggers cellular responses such as stimulation of protein kinase C. The sequence is that of Type-1 angiotensin II receptor (AGTR1) from Bos taurus (Bovine).